The primary structure comprises 423 residues: GTPase ERA-like, chloroplastic (423 aa).

A chloroplast-targeting transit peptide spans Met1–Leu60. The 171-residue stretch at Arg124–Leu294 folds into the Era-type G domain. The segment at Gly132–Ser139 is G1. Residue Gly132–Ser139 coordinates GTP. The tract at residues Gln158–His162 is G2. Residues Asp179–Gly182 form a G3 region. GTP contacts are provided by residues Asp179–Val183 and Asn244–Asp247. The G4 stretch occupies residues Asn244–Asp247. The G5 stretch occupies residues Ile273–Ala275. The KH type-2 domain occupies Tyr325–Glu402.

It belongs to the TRAFAC class TrmE-Era-EngA-EngB-Septin-like GTPase superfamily. Era GTPase family.

Its subcellular location is the plastid. The protein localises to the chloroplast stroma. It localises to the chloroplast nucleoid. In terms of biological role, nuclear genome-encoded probable GTPase involved in ribosome biogenesis in chloroplasts. Plays a role in 16S rRNA maturation in plastids and may contribute to the assembly of the small (30S) ribosomal subunit. The chain is GTPase ERA-like, chloroplastic from Oryza sativa subsp. japonica (Rice).